Reading from the N-terminus, the 186-residue chain is ADP-ribosylation factor-like protein 8A (186 aa).

An intramembrane region (note=Mediates targeting to membranes) is located at residues 1 to 19; that stretch reads MLALFNKLLDWFRALFWKE. GTP is bound by residues 29-35, 71-75, and 130-133; these read QYSGKTT, DIGGQ, and NKRD.

Belongs to the small GTPase superfamily. Arf family.

Its subcellular location is the late endosome membrane. It localises to the lysosome membrane. The protein resides in the cytoplasm. It is found in the cytoskeleton. The protein localises to the spindle. Its subcellular location is the cell projection. It localises to the axon. The protein resides in the synapse. Functionally, plays a role in lysosome motility. In neurons, mediates the anterograde axonal long-range transport of presynaptic lysosome-related vesicles required for presynaptic biogenesis and synaptic function. May play a role in chromosome segregation. The chain is ADP-ribosylation factor-like protein 8A (ARL8A) from Gallus gallus (Chicken).